A 102-amino-acid chain; its full sequence is NADH-quinone oxidoreductase subunit K (102 aa).

The next 3 membrane-spanning stretches (helical) occupy residues 5 to 25 (LSHY…GIFL), 31 to 51 (IVIL…MVAF), and 65 to 85 (LFIL…LVVF).

Belongs to the complex I subunit 4L family. In terms of assembly, NDH-1 is composed of 14 different subunits. Subunits NuoA, H, J, K, L, M, N constitute the membrane sector of the complex.

The protein localises to the cell inner membrane. It carries out the reaction a quinone + NADH + 5 H(+)(in) = a quinol + NAD(+) + 4 H(+)(out). NDH-1 shuttles electrons from NADH, via FMN and iron-sulfur (Fe-S) centers, to quinones in the respiratory chain. The immediate electron acceptor for the enzyme in this species is believed to be ubiquinone. Couples the redox reaction to proton translocation (for every two electrons transferred, four hydrogen ions are translocated across the cytoplasmic membrane), and thus conserves the redox energy in a proton gradient. This Agrobacterium fabrum (strain C58 / ATCC 33970) (Agrobacterium tumefaciens (strain C58)) protein is NADH-quinone oxidoreductase subunit K.